Here is a 330-residue protein sequence, read N- to C-terminus: Cathepsin S (330 aa).

The signal sequence occupies residues 1–17; sequence MAVLGAPGVLCDNGATA. The propeptide at 18-112 is activation peptide; the sequence is ERPTLDHHWD…GTLKSSSNQT (95 aa). 2 N-linked (GlcNAc...) asparagine glycosylation sites follow: Asn-100 and Asn-110. Intrachain disulfides connect Cys-124/Cys-222, Cys-134/Cys-179, Cys-168/Cys-211, and Cys-271/Cys-319. Cys-137 is a catalytic residue. Active-site residues include His-277 and Asn-297.

This sequence belongs to the peptidase C1 family. In terms of assembly, monomer. As to expression, highest levels occur in the ileum followed by spleen, brain, thyroid, ovary and uterus. Low levels are found in the liver, kidney, jejunum and lung with lowest levels in the heart.

Its subcellular location is the lysosome. It is found in the secreted. The protein resides in the cytoplasmic vesicle. The protein localises to the phagosome. It catalyses the reaction Similar to cathepsin L, but with much less activity on Z-Phe-Arg-|-NHMec, and more activity on the Z-Val-Val-Arg-|-Xaa compound.. Functionally, thiol protease. Key protease responsible for the removal of the invariant chain from MHC class II molecules and MHC class II antigen presentation. The bond-specificity of this proteinase is in part similar to the specificities of cathepsin L. The sequence is that of Cathepsin S (Ctss) from Rattus norvegicus (Rat).